Reading from the N-terminus, the 116-residue chain is UPF0102 protein ELI_05985 (116 aa).

It belongs to the UPF0102 family.

This is UPF0102 protein ELI_05985 from Erythrobacter litoralis (strain HTCC2594).